Consider the following 316-residue polypeptide: Annexin A13 (316 aa).

Gly2 is lipidated: N-myristoyl glycine. 4 Annexin repeats span residues 14-85, 86-157, 169-241, and 245-316; these read FDVD…ALLD, RPSE…SLLQ, DLAG…TLVR, and DQEG…ALLH.

This sequence belongs to the annexin family. Monomer and homodimer. Detected in intestine, and at much lower levels also in kidney (at protein level).

It is found in the apical cell membrane. Its subcellular location is the cell membrane. The protein resides in the cytoplasmic vesicle. Functionally, binds to membranes enriched in phosphatidylserine or phosphatidylglycerol in a calcium-dependent manner. Half-maximal membrane binding requires about 60 uM calcium. Does not bind to membranes that lack phospholipids with an acidic headgroup. In terms of biological role, binds to membranes enriched in phosphatidylserine or phosphatidylglycerol in a calcium-dependent manner, but requires higher calcium levels for membrane binding than isoform A. Half-maximal membrane binding requires about 320 uM calcium. May play a role in vesicular traffic to the apical plasma membrane. The protein is Annexin A13 (ANXA13) of Canis lupus familiaris (Dog).